We begin with the raw amino-acid sequence, 250 residues long: Histone H1.2 (250 aa).

Residues 1–11 are compositionally biased toward polar residues; sequence MSDSAVATSAS. Disordered regions lie at residues 1-53 and 101-250; these read MSDS…QMVD and KLIQ…ATKK. Residues 27 to 42 show a composition bias toward low complexity; sequence KKAAATPKSKKSTAAP. The region spanning 44-118 is the H15 domain; the sequence is SHPPTQQMVD…GASGSFKLSR (75 aa). Positions 120–133 are enriched in basic and acidic residues; that stretch reads AKKDPKPKASAVEK. A compositionally biased stretch (low complexity) spans 151–161; sequence STSTTKKAAGA. Residues 174 to 191 are compositionally biased toward basic and acidic residues; it reads KSVEKKRADKAKAKDAKK. The span at 192–211 shows a compositional bias: low complexity; sequence TGTIKAKPTTAKAKSSATKP. Basic residues-rich tracts occupy residues 212–225 and 235–250; these read KTPKPKTKSAKPKK and TAVKKPKAKTASATKK.

This sequence belongs to the histone H1/H5 family.

The protein resides in the nucleus. The protein localises to the chromosome. Its function is as follows. Histones H1 are necessary for the condensation of nucleosome chains into higher-order structures. The chain is Histone H1.2 (His1.2) from Drosophila virilis (Fruit fly).